The sequence spans 396 residues: Capsular polysaccharide biosynthesis protein CapF (396 aa).

12 helical membrane passes run 7 to 27, 41 to 61, 74 to 94, 101 to 121, 129 to 149, 153 to 173, 198 to 218, 232 to 252, 279 to 299, 315 to 335, 351 to 371, and 372 to 392; these read YMFV…LVIV, ALVI…SVIV, AILS…YVLG, ILIV…YGIY, LLGI…YIIY, HNLN…FAII, IFIL…NTGI, LGIF…ANSI, MVFI…FLGE, IILI…FLGT, LILL…YSLL, and GAAL…YYFY.

Belongs to the polysaccharide synthase family.

The protein localises to the cell membrane. Its pathway is capsule biogenesis; capsule polysaccharide biosynthesis. In terms of biological role, required for the biosynthesis of type 1 capsular polysaccharide. This Staphylococcus aureus protein is Capsular polysaccharide biosynthesis protein CapF (capF).